Reading from the N-terminus, the 165-residue chain is MALLALLLVVALPRVWTDANLTARQRDPEDSQRTDEGDNRVWCHVCERENTFECQNPRRCKWTEPYCVIAAVKIFPRFFMVAKQCSAGCAAMERPKPEEKRFLLEEPMPFFYLKCCKIRYCNLEGPPINSSVFKEYAGSMGESCGGLWLAILLLLASIAAGLSLS.

The first 17 residues, 1 to 17, serve as a signal peptide directing secretion; sequence MALLALLLVVALPRVWT. N-linked (GlcNAc...) asparagine glycosylation is present at N20. The UPAR/Ly6 domain maps to 47 to 141; it reads ERENTFECQN…VFKEYAGSMG (95 aa). The GPI-anchor amidated glycine moiety is linked to residue G138. The propeptide at 139-165 is removed in mature form; the sequence is SMGESCGGLWLAILLLLASIAAGLSLS.

Interacts with TEX101. Specifically expressed in testis (at protein level).

It is found in the secreted. It localises to the cytoplasm. Its subcellular location is the cell membrane. The protein resides in the cytoplasmic vesicle. The protein localises to the secretory vesicle. It is found in the acrosome. It localises to the membrane raft. In terms of biological role, required for sperm migration into the oviduct and male fertility by controlling binding of sperm to zona pellucida. May play a role in cell growth. The polypeptide is Lymphocyte antigen 6K (Homo sapiens (Human)).